Reading from the N-terminus, the 211-residue chain is Peptidyl-prolyl cis-trans isomerase-like 3 (211 aa).

The region spanning 1–204 is the PPIase cyclophilin-type domain; that stretch reads MSVTLHTTHG…ETLRINRVTI (204 aa).

The protein belongs to the cyclophilin-type PPIase family. PPIL3 subfamily.

It carries out the reaction [protein]-peptidylproline (omega=180) = [protein]-peptidylproline (omega=0). Its function is as follows. PPIases accelerate the folding of proteins. It catalyzes the cis-trans isomerization of proline imidic peptide bonds in oligopeptides. In Emericella nidulans (strain FGSC A4 / ATCC 38163 / CBS 112.46 / NRRL 194 / M139) (Aspergillus nidulans), this protein is Peptidyl-prolyl cis-trans isomerase-like 3 (cyp10).